A 118-amino-acid polypeptide reads, in one-letter code: Protein MT2260 (118 aa).

Belongs to the HesB/IscA family.

This Mycobacterium tuberculosis (strain CDC 1551 / Oshkosh) protein is Protein MT2260.